The primary structure comprises 237 residues: RNA polymerase sigma-28 factor (237 aa).

Residues 1–19 (MSLFAAIGYMVREVFVFVS) constitute a propeptide that is removed on maturation. The Polymerase core binding motif lies at 77-90 (DLISIGTIGLIKAI). The H-T-H motif DNA-binding region spans 197 to 206 (QREIAKALGI).

It belongs to the sigma-70 factor family. Post-translationally, proteolytically cleaved in the N-terminus probably by a SpoIIGA homolog to yield the active peptide.

Sigma factors are initiation factors that promote the attachment of RNA polymerase to specific initiation sites and are then released. This sigma factor directs the transcription of crystal protein genes, a sporulation-regulated event. In Bacillus thuringiensis subsp. kurstaki, this protein is RNA polymerase sigma-28 factor (sigK).